The sequence spans 768 residues: cGMP-dependent protein kinase, isozyme 1 (768 aa).

The segment at 1–192 (MAAGMLTDRE…NDFLKNIDAS (192 aa)) is regulatory. The segment covering 114–127 (PLASTSSASPSGRT) has biased composition (low complexity). The interval 114 to 134 (PLASTSSASPSGRTSADEVRP) is disordered. Residues 249–252 (GELA), 259–260 (RT), R366, 375–378 (GEQA), 385–386 (RT), and Y421 each bind 3',5'-cyclic GMP. Residues 457-717 (LEVVSTLGIG…IQDIKKHKWF (261 aa)) form the Protein kinase domain. Residues 463-471 (LGIGGFGRV) and K488 each bind ATP. The active-site Proton acceptor is D582. The AGC-kinase C-terminal domain occupies 718–768 (LGFDWDGLASQLLIPPFVRPIAHPTDVRYFDRFPCDLNEPPDELSGWDADF).

It belongs to the protein kinase superfamily. AGC Ser/Thr protein kinase family. cGMP subfamily. As to quaternary structure, homodimer. Mg(2+) is required as a cofactor. Post-translationally, autophosphorylated. As to expression, in embryo stage 13, expression is seen in a few large, irregular cells having the appearance of hemocytes or macrophages. In adults, expression is seen in optic lamina and weakly in testis.

It catalyses the reaction L-seryl-[protein] + ATP = O-phospho-L-seryl-[protein] + ADP + H(+). The enzyme catalyses L-threonyl-[protein] + ATP = O-phospho-L-threonyl-[protein] + ADP + H(+). With respect to regulation, binding of cGMP results in enzyme activation. The protein is cGMP-dependent protein kinase, isozyme 1 (Pkg21D) of Drosophila melanogaster (Fruit fly).